The chain runs to 106 residues: Ribulose bisphosphate carboxylase small subunit (106 aa).

It belongs to the RuBisCO small chain family. In terms of assembly, heterohexadecamer of 8 large and 8 small subunits.

Its subcellular location is the plastid. It is found in the cyanelle. RuBisCO catalyzes two reactions: the carboxylation of D-ribulose 1,5-bisphosphate, the primary event in carbon dioxide fixation, as well as the oxidative fragmentation of the pentose substrate. Both reactions occur simultaneously and in competition at the same active site. Although the small subunit is not catalytic it is essential for maximal activity. In Cyanophora paradoxa, this protein is Ribulose bisphosphate carboxylase small subunit.